We begin with the raw amino-acid sequence, 329 residues long: Probable endo-beta-1,4-glucanase B (329 aa).

Positions 1 to 18 are cleaved as a signal peptide; it reads MKFGSIVLIAAAAGSAVA. Residues Asn-33 and Asn-96 are each glycosylated (N-linked (GlcNAc...) asparagine). Catalysis depends on Glu-156, which acts as the Proton donor. Glu-263 functions as the Nucleophile in the catalytic mechanism.

This sequence belongs to the glycosyl hydrolase 5 (cellulase A) family.

The protein resides in the secreted. The enzyme catalyses Endohydrolysis of (1-&gt;4)-beta-D-glucosidic linkages in cellulose, lichenin and cereal beta-D-glucans.. In terms of biological role, has endoglucanase activity on substrates containing beta-1,4 glycosidic bonds, like in carboxymethylcellulose (CMC), hydroxyethylcellulose (HEC) and beta-glucan. Involved in the degradation of complex natural cellulosic substrates. The sequence is that of Probable endo-beta-1,4-glucanase B (eglB) from Neosartorya fischeri (strain ATCC 1020 / DSM 3700 / CBS 544.65 / FGSC A1164 / JCM 1740 / NRRL 181 / WB 181) (Aspergillus fischerianus).